The primary structure comprises 136 residues: Antistasin (136 aa).

The signal sequence occupies residues 1-17 (MIKLAILLLFTVAIVRC). Glutamine 18 carries the post-translational modification Pyrrolidone carboxylic acid. 10 disulfide bridges follow: cysteine 25–cysteine 36, cysteine 30–cysteine 43, cysteine 45–cysteine 65, cysteine 50–cysteine 68, cysteine 54–cysteine 70, cysteine 79–cysteine 90, cysteine 84–cysteine 97, cysteine 99–cysteine 120, cysteine 105–cysteine 123, and cysteine 109–cysteine 125. Positions 45–70 (CSGVRCRMHCPHGFQRSRYGCEFCKC) constitute an Antistasin-like 1 domain. The region spanning 100–125 (KIDINCRKTCPNGLKRDKLGCEYCEC) is the Antistasin-like 2 domain. Heparin-binding positions include 114-117 (KRDK) and 128-135 (KRKLIPRL).

The protein belongs to the protease inhibitor I15 (antistasin) family.

It is found in the secreted. Its function is as follows. This highly disulfide-bonded protein is a potent inhibitor of factor Xa. May have therapeutic utility as an anticoagulant. Also exhibits a strong metastatic activity. The polypeptide is Antistasin (Haementeria officinalis (Mexican leech)).